The chain runs to 181 residues: NAD(P)H-quinone oxidoreductase subunit I, chloroplastic (181 aa).

2 4Fe-4S ferredoxin-type domains span residues 52-81 (GRIH…VDWE) and 92-121 (KSYS…MTEE). 8 residues coordinate [4Fe-4S] cluster: C61, C64, C67, C71, C101, C104, C107, and C111.

This sequence belongs to the complex I 23 kDa subunit family. NDH is composed of at least 16 different subunits, 5 of which are encoded in the nucleus. It depends on [4Fe-4S] cluster as a cofactor.

It localises to the plastid. The protein localises to the chloroplast thylakoid membrane. It carries out the reaction a plastoquinone + NADH + (n+1) H(+)(in) = a plastoquinol + NAD(+) + n H(+)(out). The enzyme catalyses a plastoquinone + NADPH + (n+1) H(+)(in) = a plastoquinol + NADP(+) + n H(+)(out). Its function is as follows. NDH shuttles electrons from NAD(P)H:plastoquinone, via FMN and iron-sulfur (Fe-S) centers, to quinones in the photosynthetic chain and possibly in a chloroplast respiratory chain. The immediate electron acceptor for the enzyme in this species is believed to be plastoquinone. Couples the redox reaction to proton translocation, and thus conserves the redox energy in a proton gradient. The polypeptide is NAD(P)H-quinone oxidoreductase subunit I, chloroplastic (Zygnema circumcarinatum (Green alga)).